We begin with the raw amino-acid sequence, 96 residues long: Integration host factor subunit beta (96 aa).

Belongs to the bacterial histone-like protein family. As to quaternary structure, heterodimer of an alpha and a beta chain.

Functionally, this protein is one of the two subunits of integration host factor, a specific DNA-binding protein that functions in genetic recombination as well as in transcriptional and translational control. The polypeptide is Integration host factor subunit beta (Methylocella silvestris (strain DSM 15510 / CIP 108128 / LMG 27833 / NCIMB 13906 / BL2)).